The chain runs to 712 residues: Voltage-gated chloride channel TMC4 (712 aa).

The tract at residues 1 to 39 is disordered; that stretch reads MEENPTLESEAWGSSRGWLAPREARGAPCSSPGPSLSSV. Residues 1–168 lie on the Extracellular side of the membrane; the sequence is MEENPTLESE…GTESYFSLLR (168 aa). N-linked (GlcNAc...) asparagine glycosylation occurs at Asn107. A helical membrane pass occupies residues 169–189; it reads FLLLLNVLASVLMACMTLLPT. The Cytoplasmic portion of the chain corresponds to 190-249; the sequence is WLGGAPPGPPGPDISSPCGSYNPHSQGLVTFATQLFNLLSGEGYLEWSPLFYGFYPPRPR. The helical transmembrane segment at 250 to 270 threads the bilayer; sequence LAVTYLCWAFAVGLICLLLIL. The Extracellular segment spans residues 271-348; it reads HRSVSGLKQT…GQQARVWLVR (78 aa). The helical transmembrane segment at 349–369 threads the bilayer; sequence VLLNLLVVALLGAAFYGVYWA. Over 370-394 the chain is Cytoplasmic; sequence TGCTVELQEMPLVQELPLLKLGVNY. A helical transmembrane segment spans residues 395–415; that stretch reads LPSIFIAGVNFVLPPVFKLIA. At 416–425 the chain is on the extracellular side; sequence PLEGYTRSRQ. The helical transmembrane segment at 426 to 446 threads the bilayer; that stretch reads IVFILLRTVFLRLASLVVLLF. Over 447-483 the chain is Cytoplasmic; that stretch reads SLWNQITCGGDSEAEDCKTCGYNYKQLPCWETVLGQE. The helical transmembrane segment at 484-504 threads the bilayer; the sequence is MYKLLLFDLLTVLAVALLIQF. Over 505-542 the chain is Extracellular; that stretch reads PRKLLCGLCPGALGRLAGTQEFQVPDEVLGLIYAQTVV. Residues 543–565 form a helical membrane-spanning segment; it reads WVGSFFCPLLPLLNTVKFLLLFY. Over 566-592 the chain is Cytoplasmic; it reads LKKLTLFSTCSPAARTFRASAANFFFP. Residues 593–613 traverse the membrane as a helical segment; the sequence is LVLLLGLAISSVPLLYSIFLI. Topologically, residues 614–654 are extracellular; that stretch reads PPSKLCGPFRGQSSIWAQIPESISSLPETTQNFLFFLGTQA. A helical membrane pass occupies residues 655–677; that stretch reads FAVPLLLISSILMAYTVALANSY. Residues 678–712 lie on the Cytoplasmic side of the membrane; it reads GRLISELKRQRQTEAQNKVFLARRAVALTSTKPAL.

It belongs to the TMC family.

The protein localises to the membrane. It carries out the reaction chloride(in) = chloride(out). Its function is as follows. Voltage-gated chloride channel involved in high-concentration salt taste sensation. Depolarization induced by high NaCl concentration may trigger the activation of TMC4-mediated chloride influx into taste bud cells, helping the return to resting potential. Also allows permeation of organic anions including gluconate, but their current amplitudes at positive potentials are less than that of chloride. Involved in pH and temperature-dependent modulation of salty taste. This chain is Voltage-gated chloride channel TMC4, found in Homo sapiens (Human).